Reading from the N-terminus, the 524-residue chain is 2-isopropylmalate synthase (524 aa).

Residues 12-274 (VIIFDTTLRD…WNRIETTMLT (263 aa)) enclose the Pyruvate carboxyltransferase domain. Residues D21, H209, H211, and N245 each coordinate Mn(2+). The tract at residues 398–524 (KLMSLTVIAG…EDAPTVAVAG (127 aa)) is regulatory domain.

Belongs to the alpha-IPM synthase/homocitrate synthase family. LeuA type 1 subfamily. In terms of assembly, homodimer. The cofactor is Mn(2+).

The protein resides in the cytoplasm. It carries out the reaction 3-methyl-2-oxobutanoate + acetyl-CoA + H2O = (2S)-2-isopropylmalate + CoA + H(+). The protein operates within amino-acid biosynthesis; L-leucine biosynthesis; L-leucine from 3-methyl-2-oxobutanoate: step 1/4. In terms of biological role, catalyzes the condensation of the acetyl group of acetyl-CoA with 3-methyl-2-oxobutanoate (2-ketoisovalerate) to form 3-carboxy-3-hydroxy-4-methylpentanoate (2-isopropylmalate). In Rhodopseudomonas palustris (strain TIE-1), this protein is 2-isopropylmalate synthase.